Here is a 120-residue protein sequence, read N- to C-terminus: NAD(P)H-quinone oxidoreductase subunit 3 (120 aa).

3 helical membrane passes run 6-26 (GYDA…LALI), 64-84 (MFAL…PWAV), and 89-109 (LGVL…VALA).

Belongs to the complex I subunit 3 family. In terms of assembly, NDH-1 can be composed of about 15 different subunits; different subcomplexes with different compositions have been identified which probably have different functions.

The protein localises to the cellular thylakoid membrane. It carries out the reaction a plastoquinone + NADH + (n+1) H(+)(in) = a plastoquinol + NAD(+) + n H(+)(out). The catalysed reaction is a plastoquinone + NADPH + (n+1) H(+)(in) = a plastoquinol + NADP(+) + n H(+)(out). Functionally, NDH-1 shuttles electrons from an unknown electron donor, via FMN and iron-sulfur (Fe-S) centers, to quinones in the respiratory and/or the photosynthetic chain. The immediate electron acceptor for the enzyme in this species is believed to be plastoquinone. Couples the redox reaction to proton translocation, and thus conserves the redox energy in a proton gradient. Cyanobacterial NDH-1 also plays a role in inorganic carbon-concentration. This is NAD(P)H-quinone oxidoreductase subunit 3 from Parasynechococcus marenigrum (strain WH8102).